A 364-amino-acid chain; its full sequence is MVRVDVEERFNRIARNTVEIVTEEELKGLLASGARIKGYIGYEPSGVAHIGWLVWMYKVKDLVEAGVDFSVLEATWHAYINDKLGGDMDLIRAAARIVRRVMEAAGVPVERVRFVDAEELASDKDYWGLVIRVAKRASLARVRRALTIMGRRAEEAEVDASKLIYPLMQVSDIFYMDLDIALGGMDQRKAHMLARDVAEKLGRKKPVAIHTPIISSLQGPGRMEASQGEIDDVLAEVKMSKSKPETAVFVVDSDDDIRRKIRKAYCPAKQVQGNPVLEIARYILFARDGFTLRVDRPAKYGGPVEYTSYEELERDYTDGRLHPLDLKNAVAESLIEVVRPIRGAVLGDPAMKRALEAIEGKVTR.

An L-tyrosine-binding site is contributed by Y39. H49 and W52 together coordinate ATP. L-tyrosine contacts are provided by Y165, Q169, D172, and Q187. Residues 238 to 242 carry the 'KMSKS' region motif; that stretch reads KMSKS. Residue K241 coordinates ATP.

Belongs to the class-I aminoacyl-tRNA synthetase family. TyrS type 4 subfamily. Homodimer.

It is found in the cytoplasm. The enzyme catalyses tRNA(Tyr) + L-tyrosine + ATP = L-tyrosyl-tRNA(Tyr) + AMP + diphosphate + H(+). Functionally, catalyzes the attachment of tyrosine to tRNA(Tyr) in a two-step reaction: tyrosine is first activated by ATP to form Tyr-AMP and then transferred to the acceptor end of tRNA(Tyr). In Aeropyrum pernix (strain ATCC 700893 / DSM 11879 / JCM 9820 / NBRC 100138 / K1), this protein is Tyrosine--tRNA ligase.